The following is a 460-amino-acid chain: Oxysterols receptor LXR-beta (460 aa).

A compositionally biased stretch (low complexity) spans 1–14 (MSSPTTSSLDTPLP). The disordered stretch occupies residues 1–78 (MSSPTTSSLD…PERKRKKGPA (78 aa)). The tract at residues 1-85 (MSSPTTSSLD…GPAPKMLGHE (85 aa)) is transactivation AF-1; required for ligand-independent transactivation function. Positions 36–45 (EPWPGGPDPD) are enriched in pro residues. The nuclear receptor DNA-binding region spans 84 to 161 (HELCRVCGDK…AGMREQCVLS (78 aa)). 2 NR C4-type zinc fingers span residues 87–107 (CRVC…CEGC) and 125–149 (CRGG…LRKC). Residues 169–216 (KIRKQQQESQSQSQSPVGPQGSSSSASGPGASPGGSEAGSQGSGEGEG) are disordered. The segment covering 175–198 (QESQSQSQSPVGPQGSSSSASGPG) has biased composition (low complexity). Residues 199-215 (ASPGGSEAGSQGSGEGE) are compositionally biased toward gly residues. Residues 219 to 460 (LTAAQELMIQ…LLSEIWDVHE (242 aa)) are transactivation AF-2; required for ligand-dependent transactivation function; mediates interaction with CCAR2. One can recognise an NR LBD domain in the interval 222–460 (AQELMIQQLV…LLSEIWDVHE (239 aa)). Residues lysine 409 and lysine 447 each participate in a glycyl lysine isopeptide (Lys-Gly) (interchain with G-Cter in SUMO2) cross-link.

This sequence belongs to the nuclear hormone receptor family. NR1 subfamily. In terms of assembly, forms a heterodimer with RXR. Interacts with CCAR2 (via N-terminus) in a ligand-independent manner. Interacts (when sumoylated) with GPS2; interaction with GPS2 onto hepatic acute phase protein promoters prevents N-Cor corepressor complex dissociation. Interacts with ABCA12 and ABCA1; this interaction is required for ABCA1 localization to the cell surface and is necessary for its normal activity and stability. Post-translationally, sumoylated by SUMO2 at Lys-409 and Lys-447 during the hepatic acute phase response, leading to promote interaction with GPS2 and prevent N-Cor corepressor complex dissociation. Ubiquitous.

The protein resides in the nucleus. Its function is as follows. Nuclear receptor that exhibits a ligand-dependent transcriptional activation activity. Binds preferentially to double-stranded oligonucleotide direct repeats having the consensus half-site sequence 5'-AGGTCA-3' and 4-nt spacing (DR-4). Regulates cholesterol uptake through MYLIP-dependent ubiquitination of LDLR, VLDLR and LRP8; DLDLR and LRP8. Interplays functionally with RORA for the regulation of genes involved in liver metabolism. Induces LPCAT3-dependent phospholipid remodeling in endoplasmic reticulum (ER) membranes of hepatocytes, driving SREBF1 processing and lipogenesis. Via LPCAT3, triggers the incorporation of arachidonate into phosphatidylcholines of ER membranes, increasing membrane dynamics and enabling triacylglycerols transfer to nascent very low-density lipoprotein (VLDL) particles. Via LPCAT3 also counteracts lipid-induced ER stress response and inflammation, likely by modulating SRC kinase membrane compartmentalization and limiting the synthesis of lipid inflammatory mediators. Plays an anti-inflammatory role during the hepatic acute phase response by acting as a corepressor: inhibits the hepatic acute phase response by preventing dissociation of the N-Cor corepressor complex. This Homo sapiens (Human) protein is Oxysterols receptor LXR-beta (NR1H2).